We begin with the raw amino-acid sequence, 421 residues long: Queuine tRNA-ribosyltransferase accessory subunit 2 (421 aa).

Residues C328, C330, C333, and H359 each contribute to the Zn(2+) site.

Belongs to the queuine tRNA-ribosyltransferase family. QTRT2 subfamily. As to quaternary structure, heterodimer of a catalytic subunit and an accessory subunit. Requires Zn(2+) as cofactor.

The protein resides in the cytoplasm. Functionally, non-catalytic subunit of the queuine tRNA-ribosyltransferase (TGT) that catalyzes the base-exchange of a guanine (G) residue with queuine (Q) at position 34 (anticodon wobble position) in tRNAs with GU(N) anticodons (tRNA-Asp, -Asn, -His and -Tyr), resulting in the hypermodified nucleoside queuosine (7-(((4,5-cis-dihydroxy-2-cyclopenten-1-yl)amino)methyl)-7-deazaguanosine). This chain is Queuine tRNA-ribosyltransferase accessory subunit 2, found in Aedes aegypti (Yellowfever mosquito).